A 286-amino-acid polypeptide reads, in one-letter code: Dioxygenase trt7 (286 aa).

Residues H129, D131, and H206 each contribute to the Fe cation site.

It belongs to the PhyH family. As to quaternary structure, homodimer. Fe cation serves as cofactor.

It functions in the pathway secondary metabolite biosynthesis; terpenoid biosynthesis. In terms of biological role, dioxygenase; part of the gene cluster that mediates the biosynthesis of terretonin, a fungal meroterpenoid that acts as a mycotoxin. The first step of the pathway is the synthesis of 3,5-dimethylorsellinic acid (DMOA) by the polyketide synthase trt4. DMOA is then prenylated into farnesyl-DMOA by the polyprenyl transferase trt2. Methylation by the methyltransferase trt5 then leads to farnesyl-DMOA methyl ester which is further subject to epoxidation by the FAD-dependent monooxygenase trt8 to yield epoxyfarnesyl-DMOA methyl ester. Cyclization of epoxyfarnesyl-DMOA methyl ester by the terpene cyclase trt1 leads to a tetracycle intermediate which is in turn converted to preterretonin. Dehydrogenase trt9 comes next to transform preterretonin to preterrenoid. The FAD-dependent monooxygenase trt3 is then required for the C-hydroxylation at C16 of preterrenoid to yield terrenoid. The cytochrome P450 trt6 catalyzes three successive oxidations to transform terrenoid into an unstable intermediate, which then undergoes the D-ring expansion and unusual rearrangement of the methoxy group to afford the core skeleton of terretonin. Trt14 catalyzes the D-ring expansion of terretonin involving intramolecular methoxy rearrangement as well as the hydrolysis of the expanded D-ring and the methyl ester moiety. Finally, the nonheme iron-dependent dioxygenase trt7 accomplishes the last two oxidation reactions steps to complete the biosynthesis of terretonin. Terretonin C is produced via spontaneous decarboxylation of the terretonin precursor. Another shunt product of the terretonin biosynthesis is dihydrofarnesyl-DMOA, derived from epoxyfarnesyl-DMOA through hydrolysis of the epoxide. In Aspergillus terreus (strain NIH 2624 / FGSC A1156), this protein is Dioxygenase trt7.